The sequence spans 445 residues: Na(+)-translocating NADH-quinone reductase subunit A (445 aa).

This sequence belongs to the NqrA family. As to quaternary structure, composed of six subunits; NqrA, NqrB, NqrC, NqrD, NqrE and NqrF.

It catalyses the reaction a ubiquinone + n Na(+)(in) + NADH + H(+) = a ubiquinol + n Na(+)(out) + NAD(+). Functionally, NQR complex catalyzes the reduction of ubiquinone-1 to ubiquinol by two successive reactions, coupled with the transport of Na(+) ions from the cytoplasm to the periplasm. NqrA to NqrE are probably involved in the second step, the conversion of ubisemiquinone to ubiquinol. The protein is Na(+)-translocating NADH-quinone reductase subunit A of Pseudomonas aeruginosa (strain ATCC 15692 / DSM 22644 / CIP 104116 / JCM 14847 / LMG 12228 / 1C / PRS 101 / PAO1).